Here is a 272-residue protein sequence, read N- to C-terminus: Phosphate import ATP-binding protein PstB (272 aa).

One can recognise an ABC transporter domain in the interval 26 to 267 (LDIKNLDLYY…PSEKQTEDYI (242 aa)). 58 to 65 (GPSGCGKS) contributes to the ATP binding site.

This sequence belongs to the ABC transporter superfamily. Phosphate importer (TC 3.A.1.7) family. The complex is composed of two ATP-binding proteins (PstB), two transmembrane proteins (PstC and PstA) and a solute-binding protein (PstS).

The protein resides in the cell inner membrane. It carries out the reaction phosphate(out) + ATP + H2O = ADP + 2 phosphate(in) + H(+). Its function is as follows. Part of the ABC transporter complex PstSACB involved in phosphate import. Responsible for energy coupling to the transport system. The sequence is that of Phosphate import ATP-binding protein PstB from Idiomarina loihiensis (strain ATCC BAA-735 / DSM 15497 / L2-TR).